A 238-amino-acid chain; its full sequence is Small heat shock protein, chloroplastic (238 aa).

The disordered stretch occupies residues 31-87 (APLSTGGRTRPLSVASAAQENRDNSVDVQVSQAQNAGNQQGNAVQRRPRRAGFDISP). Positions 58-75 (VQVSQAQNAGNQQGNAVQ) are enriched in low complexity. A sHSP domain is found at 124-238 (AARARRRMPW…ERKVIDVQVQ (115 aa)).

This sequence belongs to the small heat shock protein (HSP20) family.

The protein localises to the plastid. Its subcellular location is the chloroplast. The polypeptide is Small heat shock protein, chloroplastic (HSP21) (Triticum aestivum (Wheat)).